The chain runs to 1177 residues: DNA-directed RNA polymerase subunit beta (1177 aa).

A disordered region spans residues 1-36 (MEGCILADSRQSKTAASPSPSRPQSSSNNSVPGAPN). Residues 17 to 32 (SPSPSRPQSSSNNSVP) are compositionally biased toward low complexity.

Belongs to the RNA polymerase beta chain family. As to quaternary structure, the RNAP catalytic core consists of 2 alpha, 1 beta, 1 beta' and 1 omega subunit. When a sigma factor is associated with the core the holoenzyme is formed, which can initiate transcription.

The enzyme catalyses RNA(n) + a ribonucleoside 5'-triphosphate = RNA(n+1) + diphosphate. Its function is as follows. DNA-dependent RNA polymerase catalyzes the transcription of DNA into RNA using the four ribonucleoside triphosphates as substrates. This is DNA-directed RNA polymerase subunit beta from Mycobacterium tuberculosis (strain ATCC 25177 / H37Ra).